A 56-amino-acid chain; its full sequence is Sex-specific storage protein 1 (56 aa).

It belongs to the hemocyanin family. As to expression, expressed in fat body and ovary.

Its subcellular location is the secreted. Its function is as follows. Larval storage protein (LSP) which may serve as a store of amino acids for synthesis of adult proteins. The biosynthesis, accumulation and sequestration of storage protein-1 takes place during metamorphosis and saves energy for the non-feeding pupal stage. May also be essential for egg formation. In Amsacta albistriga (Red hairy caterpillar), this protein is Sex-specific storage protein 1.